Here is a 229-residue protein sequence, read N- to C-terminus: Potassium/proton antiporter CemA (229 aa).

The next 2 helical transmembrane spans lie at 7–27 (FTPL…SFSV) and 107–127 (ILHF…SILG).

Belongs to the CemA family.

The protein resides in the plastid. Its subcellular location is the chloroplast inner membrane. The enzyme catalyses K(+)(in) + H(+)(out) = K(+)(out) + H(+)(in). Contributes to K(+)/H(+) antiport activity by supporting proton efflux to control proton extrusion and homeostasis in chloroplasts in a light-dependent manner to modulate photosynthesis. Prevents excessive induction of non-photochemical quenching (NPQ) under continuous-light conditions. Indirectly promotes efficient inorganic carbon uptake into chloroplasts. The polypeptide is Potassium/proton antiporter CemA (Solanum tuberosum (Potato)).